The following is a 391-amino-acid chain: Chorismate synthase (391 aa).

Arg-48 is a binding site for NADP(+). FMN is bound by residues 126–128 (RAS), Gly-286, 301–305 (KPTSS), and Arg-328.

Belongs to the chorismate synthase family. Requires FMNH2 as cofactor.

It catalyses the reaction 5-O-(1-carboxyvinyl)-3-phosphoshikimate = chorismate + phosphate. It participates in metabolic intermediate biosynthesis; chorismate biosynthesis; chorismate from D-erythrose 4-phosphate and phosphoenolpyruvate: step 7/7. Catalyzes the anti-1,4-elimination of the C-3 phosphate and the C-6 proR hydrogen from 5-enolpyruvylshikimate-3-phosphate (EPSP) to yield chorismate, which is the branch point compound that serves as the starting substrate for the three terminal pathways of aromatic amino acid biosynthesis. This reaction introduces a second double bond into the aromatic ring system. This Saccharolobus solfataricus (strain ATCC 35092 / DSM 1617 / JCM 11322 / P2) (Sulfolobus solfataricus) protein is Chorismate synthase.